Consider the following 219-residue polypeptide: Casein kinase II subunit beta' (219 aa).

Threonine 2 is subject to Phosphothreonine; by autocatalysis.

It belongs to the casein kinase 2 subunit beta family. As to quaternary structure, tetramer of two alpha and two beta' subunits. Phosphorylated by alpha subunit.

In terms of biological role, participates in Wnt signaling. Plays a complex role in regulating the basal catalytic activity of the alpha subunit. This chain is Casein kinase II subunit beta' (CkIIbeta2), found in Drosophila melanogaster (Fruit fly).